A 122-amino-acid chain; its full sequence is Large ribosomal subunit protein uL14 (122 aa).

Belongs to the universal ribosomal protein uL14 family. Part of the 50S ribosomal subunit. Forms a cluster with proteins L3 and L19. In the 70S ribosome, L14 and L19 interact and together make contacts with the 16S rRNA in bridges B5 and B8.

Binds to 23S rRNA. Forms part of two intersubunit bridges in the 70S ribosome. This chain is Large ribosomal subunit protein uL14, found in Rhodococcus jostii (strain RHA1).